The primary structure comprises 59 residues: Large ribosomal subunit protein bL32 (59 aa).

The tract at residues 1–59 (MAVQQNRKTPSKRGMRRSHDSLSKPTLSTEQNTGETHRRHHISADGYYRGRKVTRGQDD) is disordered. Positions 23 to 34 (SKPTLSTEQNTG) are enriched in polar residues. A compositionally biased stretch (basic residues) spans 49 to 59 (RGRKVTRGQDD).

It belongs to the bacterial ribosomal protein bL32 family.

This chain is Large ribosomal subunit protein bL32, found in Halorhodospira halophila (strain DSM 244 / SL1) (Ectothiorhodospira halophila (strain DSM 244 / SL1)).